The sequence spans 669 residues: DNA ligase (669 aa).

NAD(+) contacts are provided by residues 34-38, 83-84, and glutamate 114; these read DAEYD and SL. Lysine 116 (N6-AMP-lysine intermediate) is an active-site residue. The NAD(+) site is built by arginine 137, glutamate 171, lysine 287, and lysine 311. 4 residues coordinate Zn(2+): cysteine 405, cysteine 408, cysteine 423, and cysteine 428. The region spanning 591–669 is the BRCT domain; that stretch reads NVESYFAGKT…EERFLQELNK (79 aa).

It belongs to the NAD-dependent DNA ligase family. LigA subfamily. It depends on Mg(2+) as a cofactor. Mn(2+) serves as cofactor.

The enzyme catalyses NAD(+) + (deoxyribonucleotide)n-3'-hydroxyl + 5'-phospho-(deoxyribonucleotide)m = (deoxyribonucleotide)n+m + AMP + beta-nicotinamide D-nucleotide.. DNA ligase that catalyzes the formation of phosphodiester linkages between 5'-phosphoryl and 3'-hydroxyl groups in double-stranded DNA using NAD as a coenzyme and as the energy source for the reaction. It is essential for DNA replication and repair of damaged DNA. This Bacillus cereus (strain G9842) protein is DNA ligase.